A 632-amino-acid chain; its full sequence is Putative golgin subfamily A member 8I (632 aa).

A disordered region spans residues 1–77; it reads MAEETQHNKL…SSATLKDLES (77 aa). Polar residues predominate over residues 38–50; it reads TNGSIPQTATSGG. 2 coiled-coil regions span residues 86–154 and 209–421; these read LDSR…HMKR and KLEQ…SLMA. Over residues 352–362 the composition is skewed to basic and acidic residues; the sequence is KQEERIQEQHK. Disordered regions lie at residues 352 to 383, 423 to 445, 496 to 524, and 550 to 569; these read KQEE…ENKS, PGEG…PMPS, LSEP…DEGE, and AHNP…ELGA. Residues 508–520 show a composition bias toward gly residues; sequence LGGGHHQAGAQGG. The segment at 529–632 is golgi-targeting domain; that stretch reads AADGIAAYSN…CWAWLPRRRR (104 aa). Residues 555–568 are compositionally biased toward low complexity; the sequence is DEPGPGAPAPQELG.

It belongs to the GOLGA8 family.

It localises to the golgi apparatus. The protein localises to the golgi stack membrane. In terms of biological role, may be involved in maintaining Golgi structure. The chain is Putative golgin subfamily A member 8I from Homo sapiens (Human).